The following is a 231-amino-acid chain: Ion-translocating oxidoreductase complex subunit E (231 aa).

The next 6 helical transmembrane spans lie at 18-38 (ALVQLLGLCPLLAVTSTATNA), 39-59 (LGLGLATTLVLTLTNLTISTL), 63-83 (TPAEIRIPIYVMIIASVVSAV), 86-106 (LINAYAFGLYQSLGIFIPLIV), 125-145 (ALSALDGFSIGMGATCAMFVL), and 182-202 (PFLLAMLPPSAFIGLGLMLAG).

This sequence belongs to the NqrDE/RnfAE family. As to quaternary structure, the complex is composed of six subunits: RsxA, RsxB, RsxC, RsxD, RsxE and RsxG.

It is found in the cell inner membrane. Part of a membrane-bound complex that couples electron transfer with translocation of ions across the membrane. Required to maintain the reduced state of SoxR. The protein is Ion-translocating oxidoreductase complex subunit E of Escherichia coli O7:K1 (strain IAI39 / ExPEC).